Consider the following 426-residue polypeptide: Maintenance of mitochondrial morphology protein 1 (426 aa).

The Lumenal segment spans residues 1 to 100 (MTDSENESTE…KFSGWSFAQG (100 aa)). The chain crosses the membrane as a helical span at residues 101 to 121 (FFVGQLSIVLLFIFFLKFFIF). Residues 122-426 (SDEPSKSKNP…NTREEKPTEL (305 aa)) lie on the Cytoplasmic side of the membrane. One can recognise an SMP-LTD domain in the interval 194 to 409 (PAESLDWFNV…EPRFQFVRLP (216 aa)).

This sequence belongs to the MMM1 family. Homodimer. Component of the ER-mitochondria encounter structure (ERMES) or MDM complex, composed of MMM1, MDM10, MDM12 and MDM34. An MMM1 homodimer associates with one molecule of MDM12 on each side in a pairwise head-to-tail manner, and the SMP-LTD domains of MMM1 and MDM12 generate a continuous hydrophobic tunnel for phospholipid trafficking.

Its subcellular location is the endoplasmic reticulum membrane. Component of the ERMES/MDM complex, which serves as a molecular tether to connect the endoplasmic reticulum (ER) and mitochondria. Components of this complex are involved in the control of mitochondrial shape and protein biogenesis, and function in nonvesicular lipid trafficking between the ER and mitochondria. The MDM12-MMM1 subcomplex functions in the major beta-barrel assembly pathway that is responsible for biogenesis of all outer membrane beta-barrel proteins, and acts in a late step after the SAM complex. The MDM10-MDM12-MMM1 subcomplex further acts in the TOM40-specific pathway after the action of the MDM12-MMM1 complex. Essential for establishing and maintaining the structure of mitochondria and maintenance of mtDNA nucleoids. This Saccharomyces cerevisiae (strain AWRI1631) (Baker's yeast) protein is Maintenance of mitochondrial morphology protein 1.